The primary structure comprises 61 residues: Large ribosomal subunit protein uL30 (61 aa).

Belongs to the universal ribosomal protein uL30 family. As to quaternary structure, part of the 50S ribosomal subunit.

The chain is Large ribosomal subunit protein uL30 from Corynebacterium jeikeium (strain K411).